The following is a 371-amino-acid chain: tRNA-specific 2-thiouridylase MnmA (371 aa).

ATP is bound by residues 13 to 20 (GMSGGVDS) and Met39. The interval 99–101 (NPD) is interaction with target base in tRNA. Cys104 acts as the Nucleophile in catalysis. An intrachain disulfide couples Cys104 to Cys200. Gly128 contacts ATP. An interaction with tRNA region spans residues 150–152 (KDQ). Residue Cys200 is the Cysteine persulfide intermediate of the active site. Residues 309–310 (RY) are interaction with tRNA.

The protein belongs to the MnmA/TRMU family.

Its subcellular location is the cytoplasm. The catalysed reaction is S-sulfanyl-L-cysteinyl-[protein] + uridine(34) in tRNA + AH2 + ATP = 2-thiouridine(34) in tRNA + L-cysteinyl-[protein] + A + AMP + diphosphate + H(+). Functionally, catalyzes the 2-thiolation of uridine at the wobble position (U34) of tRNA, leading to the formation of s(2)U34. The protein is tRNA-specific 2-thiouridylase MnmA of Bacillus subtilis (strain 168).